The primary structure comprises 1363 residues: MFLILLISLPMAFAVIGDLKCTTVSINDVDTGAPSISTDIVDVTNGLGTYYVLDRVYLNTTLLLNGYYPTSGSTYRNMALKGTLLLSRLWFKPPFLSDFINGIFAKVKNTKVIKKGVMYSEFPAITIGSTFVNTSYSVVVQPHTTNLDNKLQGLLEISVCQYTMCEYPHTICHPKLGNKRVELWHWDTGVVSCLYKRNFTYDVNADYLYFHFYQEGGTFYAYFTDTGVVTKFLFNVYLGTVLSHYYVLPLTCSSAMTLEYWVTPLTSKQYLLAFNQDGVIFNAVDCKSDFMSEIKCKTLSIAPSTGVYELNGYTVQPIADVYRRIPNLPDCNIEAWLNDKSVPSPLNWERKTFSNCNFNMSSLMSFIQADSFTCNNIDAAKIYGMCFSSITIDKFAIPNGRKVDLQLGNLGYLQSFNYRIDTTATSCQLYYNLPAANVSVSRFNPSTWNRRFGFTEQFVFKPQPVGVFTHHDVVYAQHCFKAPKNFCPCKLDGSLCVGNGPGIDAGYKNSGIGTCPAGTNYLTCHNAAQCDCLCTPDPITSKSTGPYKCPQTKYLVGIGEHCSGLAIKSDYCGGNPCTCQPQAFLGWSVDSCLQGDRCNIFANFIFHDVNSGTTCSTDLQKSNTDIILGVCVNYDLYGITGQGIFVEVNATYYNSWQNLLYDSNGNLYGFRDYLTNRTFMIRSCYSGRVSAAFHANSSEPALLFRNIKCNYVFNNTLSRQLQPINYFDSYLGCVVNADNSTSSVVQTCDLTVGSGYCVDYSTKRRSRRAITTGYRFTNFEPFTVNSVNDSLEPVGGLYEIQIPSEFTIGNMEEFIQTSSPKVTIDCSAFVCGDYAACKSQLVEYGSFCDNINAILTEVNELLDTTQLQVANSLMNGVTLSTKLKDGVNFNVDDINFSPVLGCLGSACNKVSSRSAIEDLLFSKVKLSDVGFVEAYNNCTGGAEIRDLICVQSYNGIKVLPPLLSVNQISGYTLAATSASLFPPLSAAVGVPFYLNVQYRINGIGVTMDVLSQNQKLIANAFNNALDAIQEGFDATNSALVKIQAVVNANAEALNNLLQQLSNRFGAISSSLQEILSRLDALEAQAQIDRLINGRLTALNVYVSQQLSDSTLVKFSAAQAMEKVNECVKSQSSRINFCGNGNHIISLVQNAPYGLYFIHFSYVPTKYVTAKVSPGLCIAGDRGIAPKSGYFVNVNNTWMFTGSGYYYPEPITGNNVVVMSTCAVNYTKAPDVMLNISTPNLHDFKEELDQWFKNQTSVAPDLSLDYINVTFLDLQDEMNRLQEAIKVLNQSYINLKDIGTYEYYVKWPWYVWLLIGFAGVAMLVLLFFICCCTGCGTSCFKICGGCCDDYTGHQELVIKTSHDD.

The signal sequence occupies residues 1 to 13 (MFLILLISLPMAF). The Extracellular portion of the chain corresponds to 14 to 1307 (AVIGDLKCTT…GTYEYYVKWP (1294 aa)). The BetaCoV S1-NTD domain occupies 15 to 298 (VIGDLKCTTV…DFMSEIKCKT (284 aa)). 5 disulfide bridges follow: Cys21-Cys165, Cys160-Cys193, Cys172-Cys252, Cys286-Cys296, and Cys331-Cys356. N-linked (GlcNAc...) asparagine; by host glycosylation is found at Asn59 and Asn133. Asn198 is a glycosylation site (N-linked (GlcNAc...) asparagine; by host). The BetaCoV S1-CTD domain maps to 329 to 617 (PDCNIEAWLN…DVNSGTTCST (289 aa)). The N-linked (GlcNAc...) asparagine; by host glycan is linked to Asn359. 2 disulfides stabilise this stretch: Cys374–Cys427 and Cys386–Cys615. 7 N-linked (GlcNAc...) asparagine; by host glycosylation sites follow: Asn437, Asn649, Asn676, Asn696, Asn714, Asn739, and Asn788. 2 fusion peptide regions span residues 914–935 (SAIE…VEAY) and 933–953 (EAYN…VQSY). The N-linked (GlcNAc...) asparagine; by host glycan is linked to Asn937. The cysteines at positions 938 and 949 are disulfide-linked. A heptad repeat 1 region spans residues 1014–1064 (QKLIANAFNNALDAIQEGFDATNSALVKIQAVVNANAEALNNLLQQLSNRF). Residues 1043–1087 (QAVVNANAEALNNLLQQLSNRFGAISSSLQEILSRLDALEAQAQI) adopt a coiled-coil conformation. Residues Asn1194, Asn1224, Asn1234, Asn1253, Asn1267, and Asn1288 are each glycosylated (N-linked (GlcNAc...) asparagine; by host). Residues 1258 to 1296 (APDLSLDYINVTFLDLQDEMNRLQEAIKVLNQSYINLKD) form a heptad repeat 2 region. Residues 1269 to 1297 (TFLDLQDEMNRLQEAIKVLNQSYINLKDI) adopt a coiled-coil conformation. A helical membrane pass occupies residues 1308 to 1328 (WYVWLLIGFAGVAMLVLLFFI). The Cytoplasmic portion of the chain corresponds to 1329-1363 (CCCTGCGTSCFKICGGCCDDYTGHQELVIKTSHDD). The KxHxx motif lies at 1359-1363 (TSHDD).

This sequence belongs to the betacoronaviruses spike protein family. As to quaternary structure, homotrimer; each monomer consists of a S1 and a S2 subunit. The resulting peplomers protrude from the virus surface as spikes. Post-translationally, specific enzymatic cleavages in vivo yield mature proteins. The precursor is processed into S1 and S2 by host cell furin or another cellular protease to yield the mature S1 and S2 proteins. Additionally, a second cleavage leads to the release of a fusion peptide after viral attachment to host cell receptor. The cytoplasmic Cys-rich domain is palmitoylated. Spike glycoprotein is digested within host endosomes.

It localises to the virion membrane. The protein localises to the host endoplasmic reticulum-Golgi intermediate compartment membrane. Its subcellular location is the host cell membrane. In terms of biological role, attaches the virion to the cell membrane by interacting with host receptor, initiating the infection. Mediates fusion of the virion and cellular membranes by acting as a class I viral fusion protein. Under the current model, the protein has at least three conformational states: pre-fusion native state, pre-hairpin intermediate state, and post-fusion hairpin state. During viral and target cell membrane fusion, the coiled coil regions (heptad repeats) assume a trimer-of-hairpins structure, positioning the fusion peptide in close proximity to the C-terminal region of the ectodomain. The formation of this structure appears to drive apposition and subsequent fusion of viral and target cell membranes. Its function is as follows. Acts as a viral fusion peptide which is unmasked following S2 cleavage occurring upon virus endocytosis. The sequence is that of Spike glycoprotein from Bos taurus (Bovine).